Here is a 1614-residue protein sequence, read N- to C-terminus: Protein scribble homolog (1614 aa).

The segment at 1–809 is sufficient for targeting to adherens junction and to inhibit cell proliferation; it reads MLKCIPLWRC…MRLWRERMVE (809 aa). 17 LRR repeats span residues 11 to 34, 35 to 58, 59 to 81, 83 to 105, 107 to 127, 128 to 150, 151 to 173, 174 to 196, 197 to 219, 221 to 242, 243 to 265, 267 to 288, 289 to 311, 312 to 334, 336 to 357, 359 to 380, and 382 to 405; these read NRHV…IYRY, SRSL…FFRL, LNLR…VANF, QLVE…KFCK, LEIA…FTQL, RSLA…VGNL, ANLV…LSFL, VKLE…LGAL, PNLR…LGNL, RLVC…LGGL, LLLT…IGQL, QLSI…IGDC, ENLS…LGKL, TKLT…IGGC, ALSV…LAHT, ELHV…LTHL, and LKAL…DDAQ. Serine 37 carries the phosphoserine modification. A Phosphothreonine modification is found at threonine 378. 3 disordered regions span residues 417–441, 462–608, and 636–692; these read PQQP…SDAP, GAAA…RLIR, and AQPD…VVSA. Positions 428–437 are enriched in polar residues; that stretch reads GLQSSPSESW. Phosphothreonine is present on threonine 475. Over residues 479 to 494 the composition is skewed to basic and acidic residues; the sequence is SELKVMKRGVEERRGE. Residues 516-533 show a composition bias toward polar residues; the sequence is TESGLSEDSQPSTGTASQ. Positions 548 to 557 are enriched in low complexity; the sequence is QQEAAPNAQE. A compositionally biased stretch (acidic residues) spans 662-686; that stretch reads EEEDEEDEEEDEEEEEVAVAEEDKE. Positions 664–691 form a coiled coil; sequence EDEEDEEEDEEEEEVAVAEEDKEEAVVS. Serine 699 and serine 755 each carry phosphoserine. Residues 708-1219 are interaction with ARHGEF7; that stretch reads IEPARIEEEE…SLESVSSIDR (512 aa). In terms of domain architecture, PDZ 1 spans 719-806; the sequence is TLTIVRQTGG…TVQMRLWRER (88 aa). Residues 719–1184 form a required for interaction with VIM region; that stretch reads TLTIVRQTGG…TVLVCDGFDT (466 aa). Threonine 817 is modified (phosphothreonine). 3 positions are modified to phosphoserine: serine 826, serine 866, and serine 930. Residues 853–941 enclose the PDZ 2 domain; sequence VACLVRSEKG…TIALLLEREA (89 aa). The segment at 940–971 is disordered; it reads EAGGPLPPSPLPHSPPPPVTAPSTVVTASPGE. Residues 944 to 959 are compositionally biased toward pro residues; the sequence is PLPPSPLPHSPPPPVT. The segment covering 960 to 969 has biased composition (low complexity); the sequence is APSTVVTASP. 2 consecutive PDZ domains span residues 994-1083 and 1090-1178; these read EICL…RRDP and ELCI…TVLV. A phosphoserine mark is found at serine 1130, serine 1210, serine 1213, serine 1216, serine 1222, serine 1260, serine 1268, and serine 1271. The disordered stretch occupies residues 1214–1448; it reads VSSIDRELSP…LPDRALSPAE (235 aa). Over residues 1217 to 1232 the composition is skewed to basic and acidic residues; that stretch reads IDRELSPEGCGKEKEP. Threonine 1304 is subject to Phosphothreonine. Residue serine 1310 is modified to Phosphoserine. Over residues 1315-1327 the composition is skewed to basic and acidic residues; that stretch reads SFRERQKYFELEV. Serine 1340 carries the phosphoserine modification. The stretch at 1341–1368 forms a coiled coil; sequence LVGADDLRKMQEEEARKLQQKRAQLMRE. Residues 1345–1357 show a composition bias toward basic and acidic residues; the sequence is DDLRKMQEEEARK. The span at 1378–1390 shows a compositional bias: acidic residues; that stretch reads LDGEAPDDEEPEE. The segment covering 1396–1408 has biased composition (low complexity); that stretch reads GPAAGLSPSSPQP. 2 positions are modified to phosphoserine: serine 1402 and serine 1405. Residues 1418–1429 show a composition bias toward basic and acidic residues; the sequence is AKAERRHQERLR. 3 positions are modified to phosphoserine: serine 1432, serine 1445, and serine 1467. A disordered region spans residues 1476–1524; that stretch reads QMVLSKSQEGRSRRGPLERLAEAPSPAPTPSPTPVEDLGLQTSTSPGRL. The span at 1483–1496 shows a compositional bias: basic and acidic residues; the sequence is QEGRSRRGPLERLA. Serine 1500 bears the Phosphoserine mark. Threonine 1504 carries the phosphothreonine modification. 3 positions are modified to phosphoserine: serine 1506, serine 1520, and serine 1550. The segment at 1581–1614 is disordered; sequence GRPSPGTVGPEEVTLCSSRRPVRPGRRGLGPVPS.

This sequence belongs to the LAP (LRR and PDZ) protein family. Interacts with UBE3A. Interacts with PAK1 and PAK2. Interacts (via PDZ domains) with VANGL2. Interacts (via PDZ domains) with LPP and TRIP6; the interaction is direct. Interacts (via PDZ domains) with TJP2. Interacts (via PDZ domains) with APC; may mediate APC targeting to adherens junctions of epithelial cells. Interacts (via PDZ domains) with TSHR; regulates TSHR trafficking and function. Interacts with ARHGEF7 and GIT1; interacts directly with ARHGEF7. Interacts with CTNNB1. Interacts with MAPK12. Interacts (via PDZ domains 1 and 3) with MCC. Interacts with DLG5. Interacts with STK4/MST1 and LATS1 in the presence of DLG5. Interacts (via PDZ domain 3) with CRTAM (via PDZ-binding motif); the interaction promotes CRTAM and SCRIB polarization in a subset of CD4+ T-cells. Interacts with YES1, when YES1 is in a closed conformation; the interaction facilitates YES1 autophosphorylation. Interacts (via PDZ domains) with VIM; the interaction protects SCRIB from proteasomal degradation and facilitates SCRIB localization to intermediate filaments, the interaction is reduced by cell contact inhibition. Post-translationally, ubiquitinated; targeted for UBE3A-dependent multiubiquitination and degraded. Palmitoylated. Could be depalmitoylated by LYPLA1 and/or LYPLA2. Palmitoylation of SCRIB by ZDHHC7 is required for its localization to cell-cell junctions, function in the establishement of epithelial cell polarity and the regulation of downstream signaling pathways important for epithelial cell differentiation.

It localises to the cell membrane. The protein localises to the cell junction. It is found in the adherens junction. Its subcellular location is the cell projection. The protein resides in the lamellipodium. It localises to the cytoplasm. The protein localises to the postsynapse. It is found in the presynapse. Its function is as follows. Scaffold protein involved in different aspects of polarized cell differentiation regulating epithelial and neuronal morphogenesis and T-cell polarization. Via its interaction with CRTAM, required for the late phase polarization of a subset of CD4+ T-cells, which in turn regulates TCR-mediated proliferation and IFNG and IL22 production. Plays a role in cell directional movement, cell orientation, cell sheet organization and Golgi complex polarization at the cell migration front. Promotes epithelial cell layer barrier function via maintaining cell-cell adhesion. Most probably functions in the establishment of apico-basal cell polarity. May function in cell proliferation regulating progression from G1 to S phase and as a positive regulator of apoptosis for instance during acinar morphogenesis of the mammary epithelium. May regulate cell invasion via MAPK-mediated cell migration and adhesion. May play a role in exocytosis and in the targeting of synaptic vesicles to synapses. Functions as an activator of Rac GTPase activity. This chain is Protein scribble homolog, found in Canis lupus familiaris (Dog).